The primary structure comprises 257 residues: UPF0246 protein YaaA (257 aa).

It belongs to the UPF0246 family.

This chain is UPF0246 protein YaaA, found in Salmonella agona (strain SL483).